Reading from the N-terminus, the 316-residue chain is Ribosomal RNA small subunit methyltransferase H (316 aa).

S-adenosyl-L-methionine-binding positions include 35–37 (GGH), aspartate 55, phenylalanine 79, aspartate 101, and glutamine 108.

It belongs to the methyltransferase superfamily. RsmH family.

It localises to the cytoplasm. It catalyses the reaction cytidine(1402) in 16S rRNA + S-adenosyl-L-methionine = N(4)-methylcytidine(1402) in 16S rRNA + S-adenosyl-L-homocysteine + H(+). In terms of biological role, specifically methylates the N4 position of cytidine in position 1402 (C1402) of 16S rRNA. This is Ribosomal RNA small subunit methyltransferase H from Aliivibrio fischeri (strain ATCC 700601 / ES114) (Vibrio fischeri).